A 602-amino-acid chain; its full sequence is Aspartate--tRNA(Asp/Asn) ligase (602 aa).

Glu-176 serves as a coordination point for L-aspartate. The tract at residues 200–203 (QQFK) is aspartate. Arg-222 and His-452 together coordinate L-aspartate. Residue 222 to 224 (RDE) coordinates ATP. Residue Glu-490 participates in ATP binding. Arg-497 is a binding site for L-aspartate. Residue 542 to 545 (GIDR) participates in ATP binding.

It belongs to the class-II aminoacyl-tRNA synthetase family. Type 1 subfamily. In terms of assembly, homodimer.

It localises to the cytoplasm. It carries out the reaction tRNA(Asx) + L-aspartate + ATP = L-aspartyl-tRNA(Asx) + AMP + diphosphate. Its function is as follows. Aspartyl-tRNA synthetase with relaxed tRNA specificity since it is able to aspartylate not only its cognate tRNA(Asp) but also tRNA(Asn). Reaction proceeds in two steps: L-aspartate is first activated by ATP to form Asp-AMP and then transferred to the acceptor end of tRNA(Asp/Asn). The polypeptide is Aspartate--tRNA(Asp/Asn) ligase (Rickettsia bellii (strain OSU 85-389)).